A 455-amino-acid chain; its full sequence is MLAVSPAMCPDIEDRAAVAGDAGMEVVGMSSDDMDQFDFSVDDIDFGDFFLRLEDGDVLPDLEVDPAEIFTDFEAIATSGGEGVQDQEVPTVELLAPADDVGVLDPCGDVVVGEENAAFAGAGEEKGGCNQDDDAGEANVDDGAAAVEAKSSSPSSTTSSSQEAESRHKSSSKSSHGKKKAKVDWTPELHRRFVQAVEQLGIDKAVPSRILEIMGIDSLTRHNIASHLQKYRSHRKHMIAREAEAASWTQRRQIYAAGGGAVAKRPESNAWTVPTIGFPPPPPPPPSPAPIQHFARPLHVWGHPTMDPSRVPVWPPRHLVPRGPAPPWVPPPPPSDPAFWHHPYMRGPAHVPTQGTPCMAMPMPAARFPAPPVPGVVPCPMYRPLTPPALASKNQQDAQLQLQVQPSSESIDAAIGDVLSKPWLPLPLGLKPPSVDSVMGELQRQGVANVPPACG.

Residues 145–163 (AAVEAKSSSPSSTTSSSQE) are compositionally biased toward low complexity. The disordered stretch occupies residues 145–183 (AAVEAKSSSPSSTTSSSQEAESRHKSSSKSSHGKKKAKV). Positions 169 to 181 (KSSSKSSHGKKKA) are enriched in basic residues. An HTH myb-type domain is found at 177 to 236 (GKKKAKVDWTPELHRRFVQAVEQLGIDKAVPSRILEIMGIDSLTRHNIASHLQKYRSHRK). A DNA-binding region (H-T-H motif) is located at residues 207 to 232 (PSRILEIMGIDSLTRHNIASHLQKYR).

In terms of tissue distribution, expressed in leaves.

It is found in the nucleus. Functionally, probable transcriptional activator that promotes chloroplast development. Acts as an activator of nuclear photosynthetic genes involved in chlorophyll biosynthesis, light harvesting, and electron transport. This Oryza sativa subsp. japonica (Rice) protein is Probable transcription factor GLK1 (GLK1).